The primary structure comprises 310 residues: Tagatose-6-phosphate kinase (310 aa).

This sequence belongs to the carbohydrate kinase PfkB family. LacC subfamily.

The enzyme catalyses D-tagatofuranose 6-phosphate + ATP = D-tagatofuranose 1,6-bisphosphate + ADP + H(+). Its pathway is carbohydrate metabolism; D-tagatose 6-phosphate degradation; D-glyceraldehyde 3-phosphate and glycerone phosphate from D-tagatose 6-phosphate: step 1/2. The protein is Tagatose-6-phosphate kinase of Staphylococcus aureus (strain Mu3 / ATCC 700698).